We begin with the raw amino-acid sequence, 352 residues long: MSILAEKLSSILKRYDELTALLSSVEVVSDIKKLTELSKEQSSIEEISVASKEYLSVLEGIKENKELLEDKELSELAKEELKILEIQKSELETAIKQLLIPKDPNDDKNIYLELRAGTGGDEAGIFVGDLFKAYCRYADLKKWKVEIVSSSENSVGGYKEIIVLIKGKGVYSRLKFEAGTHRVQRVPETESQGRIHTSAITVAIMPEVDDVEVSINPSDLKIEVFRAGGHGGQCVNTTDSAVRITHLPTNISVSMQDEKSQHKNKDKALKILKARLYEKQIEEQQLANAKDRKEQVGSGDRSERIRTYNYPQNRLSEHRINLTLYSLEEIMLSGNLDEVINPLIAHAQSQFE.

Q233 carries the N5-methylglutamine modification. Positions 288–309 (NAKDRKEQVGSGDRSERIRTYN) are disordered. The segment covering 289–306 (AKDRKEQVGSGDRSERIR) has biased composition (basic and acidic residues).

This sequence belongs to the prokaryotic/mitochondrial release factor family. In terms of processing, methylated by PrmC. Methylation increases the termination efficiency of RF1.

The protein localises to the cytoplasm. In terms of biological role, peptide chain release factor 1 directs the termination of translation in response to the peptide chain termination codons UAG and UAA. The sequence is that of Peptide chain release factor 1 (prfA) from Helicobacter pylori (strain J99 / ATCC 700824) (Campylobacter pylori J99).